We begin with the raw amino-acid sequence, 488 residues long: UDP-N-acetylmuramate--L-alanine ligase (488 aa).

129 to 135 (GSHGKTT) contacts ATP.

It belongs to the MurCDEF family.

The protein resides in the cytoplasm. It carries out the reaction UDP-N-acetyl-alpha-D-muramate + L-alanine + ATP = UDP-N-acetyl-alpha-D-muramoyl-L-alanine + ADP + phosphate + H(+). It functions in the pathway cell wall biogenesis; peptidoglycan biosynthesis. Its function is as follows. Cell wall formation. This chain is UDP-N-acetylmuramate--L-alanine ligase, found in Prochlorococcus marinus (strain MIT 9313).